The sequence spans 172 residues: Probable chorismate pyruvate-lyase (172 aa).

The substrate site is built by methionine 37, arginine 79, leucine 117, and glutamate 158.

This sequence belongs to the UbiC family.

It is found in the cytoplasm. It catalyses the reaction chorismate = 4-hydroxybenzoate + pyruvate. It participates in cofactor biosynthesis; ubiquinone biosynthesis. Removes the pyruvyl group from chorismate, with concomitant aromatization of the ring, to provide 4-hydroxybenzoate (4HB) for the ubiquinone pathway. This chain is Probable chorismate pyruvate-lyase, found in Bartonella quintana (strain Toulouse) (Rochalimaea quintana).